We begin with the raw amino-acid sequence, 619 residues long: DEAD-box ATP-dependent RNA helicase 14 (619 aa).

Alanine 2 carries the N-acetylalanine modification. The region spanning 17 to 51 (HTLPKPWKGLIDDRTGYLYFWNPETNVTQYEKPTP) is the WW domain. The disordered stretch occupies residues 47 to 139 (EKPTPSLPPK…APASELSPEA (93 aa)). Over residues 61–71 (VSVSSSVQVQQ) the composition is skewed to low complexity. Residues 78-93 (PKDDDKYSRGSERVSR) show a composition bias toward basic and acidic residues. The segment covering 125–139 (PLPSSAPASELSPEA) has biased composition (low complexity). Serine 136 bears the Phosphoserine mark. Residues 158–186 (MSFEATGFPPELLREVLSAGFSAPTPIQA) carry the Q motif motif. The region spanning 189–363 (WPIAMQGRDI…ADLLVNPAQV (175 aa)) is the Helicase ATP-binding domain. 202–209 (AKTGSGKT) provides a ligand contact to ATP. The DEAD box motif lies at 311-314 (DEAD). A Helicase C-terminal domain is found at 392-536 (RLEQILRSQE…RVPPQIREMA (145 aa)). Residues 528 to 619 (VPPQIREMAT…FHETMMMKHR (92 aa)) are disordered. The span at 552 to 568 (PSGGRGRGGDSGYGGRG) shows a compositional bias: gly residues. Basic and acidic residues-rich tracts occupy residues 582-595 (GRER…ERFN) and 609-619 (SFHETMMMKHR).

Belongs to the DEAD box helicase family. DDX5/DBP2 subfamily. Ubiquitous. Preferentially expressed in flowers and roots.

It is found in the nucleus. It catalyses the reaction ATP + H2O = ADP + phosphate + H(+). In terms of biological role, ATP-dependent RNA helicase involved nonsense-mediated mRNA decay and ribosome biogenesis through rRNA processing. This is DEAD-box ATP-dependent RNA helicase 14 (RH14) from Arabidopsis thaliana (Mouse-ear cress).